Here is a 156-residue protein sequence, read N- to C-terminus: Small ribosomal subunit protein uS7 (156 aa).

Belongs to the universal ribosomal protein uS7 family. As to quaternary structure, part of the 30S ribosomal subunit. Contacts proteins S9 and S11.

Its function is as follows. One of the primary rRNA binding proteins, it binds directly to 16S rRNA where it nucleates assembly of the head domain of the 30S subunit. Is located at the subunit interface close to the decoding center, probably blocks exit of the E-site tRNA. In Arthrobacter sp. (strain FB24), this protein is Small ribosomal subunit protein uS7.